The chain runs to 75 residues: Bacteriocin lactacin-F subunit LafA (75 aa).

Positions 1–18 are excised as a propeptide; the sequence is MKQFNYLSHKDLAVVVGG.

The protein belongs to the bacteriocin class IIB family. This bacteriocin depends upon the complementation of two peptides for activity: LafA and LafX. Associated with a 180 kDa bacteriocin complex.

Its function is as follows. Heat stable bacteriocin active against Enterococcus faecalis and other Lactobacilli. The protein is Bacteriocin lactacin-F subunit LafA (lafA) of Lactobacillus johnsonii (strain CNCM I-12250 / La1 / NCC 533).